We begin with the raw amino-acid sequence, 503 residues long: Probable cytosol aminopeptidase (503 aa).

Mn(2+) contacts are provided by lysine 274 and aspartate 279. Residue lysine 286 is part of the active site. The Mn(2+) site is built by aspartate 297, aspartate 356, and glutamate 358. Arginine 360 is a catalytic residue.

Belongs to the peptidase M17 family. The cofactor is Mn(2+).

Its subcellular location is the cytoplasm. It carries out the reaction Release of an N-terminal amino acid, Xaa-|-Yaa-, in which Xaa is preferably Leu, but may be other amino acids including Pro although not Arg or Lys, and Yaa may be Pro. Amino acid amides and methyl esters are also readily hydrolyzed, but rates on arylamides are exceedingly low.. The catalysed reaction is Release of an N-terminal amino acid, preferentially leucine, but not glutamic or aspartic acids.. Presumably involved in the processing and regular turnover of intracellular proteins. Catalyzes the removal of unsubstituted N-terminal amino acids from various peptides. The protein is Probable cytosol aminopeptidase of Paraburkholderia phymatum (strain DSM 17167 / CIP 108236 / LMG 21445 / STM815) (Burkholderia phymatum).